A 301-amino-acid chain; its full sequence is ATP synthase gamma chain (301 aa).

The protein belongs to the ATPase gamma chain family. As to quaternary structure, F-type ATPases have 2 components, CF(1) - the catalytic core - and CF(0) - the membrane proton channel. CF(1) has five subunits: alpha(3), beta(3), gamma(1), delta(1), epsilon(1). CF(0) has three main subunits: a, b and c.

It localises to the cell inner membrane. In terms of biological role, produces ATP from ADP in the presence of a proton gradient across the membrane. The gamma chain is believed to be important in regulating ATPase activity and the flow of protons through the CF(0) complex. In Bordetella avium (strain 197N), this protein is ATP synthase gamma chain.